Reading from the N-terminus, the 268-residue chain is uncharacterized protein (268 aa).

This is an uncharacterized protein from Acanthamoeba polyphaga mimivirus (APMV).